The following is a 102-amino-acid chain: uncharacterized protein (102 aa).

The signal sequence occupies residues 1-19 (MFLFCFVLFCSLVFPLARG).

This is an uncharacterized protein from Saccharomyces cerevisiae (strain ATCC 204508 / S288c) (Baker's yeast).